Consider the following 317-residue polypeptide: Lipoyl synthase (317 aa).

Positions 59, 64, 70, 85, 89, 92, and 298 each coordinate [4Fe-4S] cluster. The Radical SAM core domain occupies 71-287; that stretch reads WSQRHASFMI…AKIGKAKGFL (217 aa).

The protein belongs to the radical SAM superfamily. Lipoyl synthase family. [4Fe-4S] cluster serves as cofactor.

It localises to the cytoplasm. The enzyme catalyses [[Fe-S] cluster scaffold protein carrying a second [4Fe-4S](2+) cluster] + N(6)-octanoyl-L-lysyl-[protein] + 2 oxidized [2Fe-2S]-[ferredoxin] + 2 S-adenosyl-L-methionine + 4 H(+) = [[Fe-S] cluster scaffold protein] + N(6)-[(R)-dihydrolipoyl]-L-lysyl-[protein] + 4 Fe(3+) + 2 hydrogen sulfide + 2 5'-deoxyadenosine + 2 L-methionine + 2 reduced [2Fe-2S]-[ferredoxin]. The protein operates within protein modification; protein lipoylation via endogenous pathway; protein N(6)-(lipoyl)lysine from octanoyl-[acyl-carrier-protein]: step 2/2. Catalyzes the radical-mediated insertion of two sulfur atoms into the C-6 and C-8 positions of the octanoyl moiety bound to the lipoyl domains of lipoate-dependent enzymes, thereby converting the octanoylated domains into lipoylated derivatives. The protein is Lipoyl synthase of Bartonella bacilliformis (strain ATCC 35685 / KC583 / Herrer 020/F12,63).